The following is a 342-amino-acid chain: N-acetyl-gamma-glutamyl-phosphate reductase (342 aa).

Cysteine 149 is a catalytic residue.

The protein belongs to the NAGSA dehydrogenase family. Type 1 subfamily.

The protein resides in the cytoplasm. It catalyses the reaction N-acetyl-L-glutamate 5-semialdehyde + phosphate + NADP(+) = N-acetyl-L-glutamyl 5-phosphate + NADPH + H(+). The protein operates within amino-acid biosynthesis; L-arginine biosynthesis; N(2)-acetyl-L-ornithine from L-glutamate: step 3/4. Functionally, catalyzes the NADPH-dependent reduction of N-acetyl-5-glutamyl phosphate to yield N-acetyl-L-glutamate 5-semialdehyde. The sequence is that of N-acetyl-gamma-glutamyl-phosphate reductase from Cereibacter sphaeroides (strain ATCC 17023 / DSM 158 / JCM 6121 / CCUG 31486 / LMG 2827 / NBRC 12203 / NCIMB 8253 / ATH 2.4.1.) (Rhodobacter sphaeroides).